The chain runs to 362 residues: Ferredoxin--NADP reductase 1 (362 aa).

7 residues coordinate FAD: D47, Q55, Y60, A100, F141, D309, and S350.

It belongs to the ferredoxin--NADP reductase type 2 family. Homodimer. The cofactor is FAD.

It carries out the reaction 2 reduced [2Fe-2S]-[ferredoxin] + NADP(+) + H(+) = 2 oxidized [2Fe-2S]-[ferredoxin] + NADPH. The sequence is that of Ferredoxin--NADP reductase 1 from Cupriavidus pinatubonensis (strain JMP 134 / LMG 1197) (Cupriavidus necator (strain JMP 134)).